A 189-amino-acid chain; its full sequence is Peptidyl-tRNA hydrolase (189 aa).

Tyr-15 serves as a coordination point for tRNA. The active-site Proton acceptor is His-20. The tRNA site is built by Phe-66, Asn-68, and Asn-114.

The protein belongs to the PTH family. Monomer.

Its subcellular location is the cytoplasm. It carries out the reaction an N-acyl-L-alpha-aminoacyl-tRNA + H2O = an N-acyl-L-amino acid + a tRNA + H(+). In terms of biological role, hydrolyzes ribosome-free peptidyl-tRNAs (with 1 or more amino acids incorporated), which drop off the ribosome during protein synthesis, or as a result of ribosome stalling. Its function is as follows. Catalyzes the release of premature peptidyl moieties from peptidyl-tRNA molecules trapped in stalled 50S ribosomal subunits, and thus maintains levels of free tRNAs and 50S ribosomes. This Streptococcus pneumoniae (strain CGSP14) protein is Peptidyl-tRNA hydrolase.